The chain runs to 208 residues: Ribosomal RNA large subunit methyltransferase E (208 aa).

S-adenosyl-L-methionine-binding residues include Gly63, Trp65, Asp83, Asp99, and Asp124. The active-site Proton acceptor is the Lys164.

This sequence belongs to the class I-like SAM-binding methyltransferase superfamily. RNA methyltransferase RlmE family.

It localises to the cytoplasm. It carries out the reaction uridine(2552) in 23S rRNA + S-adenosyl-L-methionine = 2'-O-methyluridine(2552) in 23S rRNA + S-adenosyl-L-homocysteine + H(+). Specifically methylates the uridine in position 2552 of 23S rRNA at the 2'-O position of the ribose in the fully assembled 50S ribosomal subunit. The protein is Ribosomal RNA large subunit methyltransferase E of Salmonella paratyphi A (strain ATCC 9150 / SARB42).